Consider the following 118-residue polypeptide: Large ribosomal subunit protein uL18 (118 aa).

This sequence belongs to the universal ribosomal protein uL18 family. Part of the 50S ribosomal subunit; part of the 5S rRNA/L5/L18/L25 subcomplex. Contacts the 5S and 23S rRNAs.

In terms of biological role, this is one of the proteins that bind and probably mediate the attachment of the 5S RNA into the large ribosomal subunit, where it forms part of the central protuberance. In Caulobacter sp. (strain K31), this protein is Large ribosomal subunit protein uL18.